The chain runs to 382 residues: Carbamoyl phosphate synthase small chain (382 aa).

Residues 1-189 form a CPSase region; the sequence is MIKSALLVLE…GLPEAKKEDE (189 aa). Positions 47, 241, and 243 each coordinate L-glutamine. A Glutamine amidotransferase type-1 domain is found at 193–380; it reads HVVAYDFGAK…IALIEQYRKT (188 aa). Cysteine 269 functions as the Nucleophile in the catalytic mechanism. The L-glutamine site is built by leucine 270, glutamine 273, asparagine 311, glycine 313, and phenylalanine 314. Catalysis depends on residues histidine 353 and glutamate 355.

This sequence belongs to the CarA family. As to quaternary structure, composed of two chains; the small (or glutamine) chain promotes the hydrolysis of glutamine to ammonia, which is used by the large (or ammonia) chain to synthesize carbamoyl phosphate. Tetramer of heterodimers (alpha,beta)4.

The enzyme catalyses hydrogencarbonate + L-glutamine + 2 ATP + H2O = carbamoyl phosphate + L-glutamate + 2 ADP + phosphate + 2 H(+). It catalyses the reaction L-glutamine + H2O = L-glutamate + NH4(+). It functions in the pathway amino-acid biosynthesis; L-arginine biosynthesis; carbamoyl phosphate from bicarbonate: step 1/1. The protein operates within pyrimidine metabolism; UMP biosynthesis via de novo pathway; (S)-dihydroorotate from bicarbonate: step 1/3. In terms of biological role, small subunit of the glutamine-dependent carbamoyl phosphate synthetase (CPSase). CPSase catalyzes the formation of carbamoyl phosphate from the ammonia moiety of glutamine, carbonate, and phosphate donated by ATP, constituting the first step of 2 biosynthetic pathways, one leading to arginine and/or urea and the other to pyrimidine nucleotides. The small subunit (glutamine amidotransferase) binds and cleaves glutamine to supply the large subunit with the substrate ammonia. The sequence is that of Carbamoyl phosphate synthase small chain from Escherichia coli O6:H1 (strain CFT073 / ATCC 700928 / UPEC).